Here is a 105-residue protein sequence, read N- to C-terminus: Flower-specific defensin (105 aa).

A signal peptide spans 1-25 (MARSLCFMAFAILAMMLFVAYEVQA). Cystine bridges form between cysteine 28-cysteine 72, cysteine 39-cysteine 59, cysteine 45-cysteine 66, and cysteine 49-cysteine 68. Positions 73 to 105 (VFDEKMTKTGAEILAEEAKTLAAALLEEEIMDN) are cleaved as a propeptide — removed in mature form.

This sequence belongs to the DEFL family. In terms of tissue distribution, most abundant in the epidermal cell layers of the petals and sepals, within the connective cells of the anthers, and the cortical cells of the style. Not detected in the tapetum, pollen mother cells, the transmitting tissue, the vascular bundles of the anther and style or in leaves. Expressed also in ovaries, but barley detectable in roots.

It is found in the secreted. The protein localises to the vacuole. Plant defense peptide with antifungal activity against F.oxysporum and B.cinerea. Retards the growth of the Lepidopteran insect pests H.armigera and H.punctigera. This Nicotiana alata (Winged tobacco) protein is Flower-specific defensin (D1).